Reading from the N-terminus, the 1567-residue chain is ABC multidrug transporter MDR1 (1567 aa).

The span at 1–11 (MASQPPQPPSG) shows a compositional bias: pro residues. The tract at residues 1-37 (MASQPPQPPSGQPDTQYEEYQSEVITETTNRPTPAAD) is disordered. Residues 22 to 32 (SEVITETTNRP) are compositionally biased toward polar residues. 3 N-linked (GlcNAc...) asparagine glycosylation sites follow: asparagine 149, asparagine 157, and asparagine 356. Residues 167-432 (VQYQDTFLSP…FEEMGWYCPP (266 aa)) form the ABC transporter 1 domain. Helical transmembrane passes span 543–563 (STIATNISQIMMALIIGSLFF), 571–591 (GFFAKGSVIFFAILLNGLMSI), 636–656 (IPIKFLLALVFNIIIYFLGGL), 661–681 (AKFFIFFLFTFITILTMSAIF), 691–711 (IPQALALAGVMILALVIYTGF), and 798–818 (LGILLGFLAFFYFVYLVVSEL). 3 N-linked (GlcNAc...) asparagine glycosylation sites follow: asparagine 819, asparagine 895, and asparagine 912. Residues 891–1134 (FTWRNVTYDI…LLNYFETHGA (244 aa)) enclose the ABC transporter 2 domain. An ATP-binding site is contributed by 927–934 (GVSGAGKT). The disordered stretch occupies residues 1172–1202 (ESRHVQQELDRIQSETSKRNEGHGQSAEKEP). A helical transmembrane segment spans residues 1231–1251 (IWGKLLLGLTSALFIGFSFFL). Asparagine 1253 is a glycosylation site (N-linked (GlcNAc...) asparagine). 5 helical membrane passes run 1257 to 1277 (AGLQNSLFSIFMLTTIFSSLV), 1305 to 1325 (VFLLANIIVEIPYQILLGIIA), 1345 to 1365 (ILLLYCVQFFIFASTFAQMII), 1372 to 1392 (ETAGGIATTMFGLMVTFNGVL), and 1498 to 1518 (GIGWAYIVFNIFATVALYYLI).

It belongs to the ABC transporter superfamily. ABCG family. PDR (TC 3.A.1.205) subfamily.

The protein resides in the cell membrane. The enzyme catalyses voriconazole(in) + ATP + H2O = voriconazole(out) + ADP + phosphate + H(+). It carries out the reaction fluconazole(in) + ATP + H2O = fluconazole(out) + ADP + phosphate + H(+). It catalyses the reaction (R)-miconazole(in) + ATP + H2O = (R)-miconazole(out) + ADP + phosphate + H(+). The catalysed reaction is (S)-miconazole(in) + ATP + H2O = (S)-miconazole(out) + ADP + phosphate + H(+). Functionally, pleiotropic ABC efflux transporter that may be involved in the modulation susceptibility to a wide range of unrelated cytotoxic compounds. This is ABC multidrug transporter MDR1 from Trichophyton tonsurans (strain CBS 112818) (Scalp ringworm fungus).